A 181-amino-acid polypeptide reads, in one-letter code: Adenine phosphoribosyltransferase (181 aa).

Belongs to the purine/pyrimidine phosphoribosyltransferase family. Homodimer.

It localises to the cytoplasm. The catalysed reaction is AMP + diphosphate = 5-phospho-alpha-D-ribose 1-diphosphate + adenine. The protein operates within purine metabolism; AMP biosynthesis via salvage pathway; AMP from adenine: step 1/1. In terms of biological role, catalyzes a salvage reaction resulting in the formation of AMP, that is energically less costly than de novo synthesis. In Aliivibrio salmonicida (strain LFI1238) (Vibrio salmonicida (strain LFI1238)), this protein is Adenine phosphoribosyltransferase.